The primary structure comprises 2066 residues: Kinesin-like protein KIN-12C (2066 aa).

2 disordered regions span residues 1–41 (MSRN…SQIQ) and 59–116 (RAQH…RVSL). Residues 20 to 33 (SLSLFSPSRPPLNS) are compositionally biased toward low complexity. The span at 67–76 (GPEKKFEVLE) shows a compositional bias: basic and acidic residues. A compositionally biased stretch (polar residues) spans 99–109 (EPNSAQSTPTR). One can recognise a Kinesin motor domain in the interval 168 to 505 (NVQVLIRLRP…LKFAQRAKLI (338 aa)). Residue 249-256 (GQTGSGKT) coordinates ATP. Microtubules-binding regions lie at residues 375–379 (SSRSH), 406–412 (VDLAGSE), and 454–458 (HVPYR). Coiled-coil stretches lie at residues 1521–1618 (DLKT…VDEI) and 1650–1772 (KIYA…EILL). Disordered stretches follow at residues 1803 to 1823 (SAAE…RGSS) and 2043 to 2066 (KYRK…TRYR). A coiled-coil region spans residues 1905 to 2051 (VQRVVEKAQQ…AKYRKTSNNH (147 aa)). The span at 2047-2066 (TSNNHPSTRTQGQSSGTRYR) shows a compositional bias: polar residues.

This sequence belongs to the TRAFAC class myosin-kinesin ATPase superfamily. Kinesin family. KIN-12 subfamily. As to quaternary structure, interacts with TAN. Interacts with RANGAP1. As to expression, expressed in tissues enriched in dividing cells, such as root meristems, root primordia, and leaf primordia/young leaves.

It localises to the cytoplasm. Its subcellular location is the cytoskeleton. The protein resides in the phragmoplast. In terms of biological role, involved in the spatial control of cytokinesis by a proper phragmoplast guidance. Localizes TAN to the cortical division sites (CDS) during cytokinesis via direct binding. The protein is Kinesin-like protein KIN-12C of Arabidopsis thaliana (Mouse-ear cress).